The primary structure comprises 493 residues: Glutamate--tRNA ligase (493 aa).

A 'HIGH' region motif is present at residues 10–20 (PSPTGDPHVGT). The 'KMSKS' region signature appears at 251–255 (KLSKR). Lys-254 lines the ATP pocket.

This sequence belongs to the class-I aminoacyl-tRNA synthetase family. Glutamate--tRNA ligase type 1 subfamily. Monomer.

The protein resides in the cytoplasm. The enzyme catalyses tRNA(Glu) + L-glutamate + ATP = L-glutamyl-tRNA(Glu) + AMP + diphosphate. Catalyzes the attachment of glutamate to tRNA(Glu) in a two-step reaction: glutamate is first activated by ATP to form Glu-AMP and then transferred to the acceptor end of tRNA(Glu). This chain is Glutamate--tRNA ligase, found in Pseudomonas putida (strain GB-1).